The primary structure comprises 214 residues: Charged multivesicular body protein 2b-B (214 aa).

The stretch at 25-55 (QRAITRDRAALEKQEKQLEMEIKKMAKTGNK) forms a coiled coil. The tract at residues 178–200 (MAKAPSAAKGLPSTSAAKSKGIS) is disordered. The MIT-interacting motif signature appears at 202–212 (EEIERQLKALG).

Belongs to the SNF7 family. As to quaternary structure, probable core component of the endosomal sorting required for transport complex III (ESCRT-III). ESCRT-III components are thought to multimerize to form a flat lattice on the perimeter membrane of the endosome.

The protein localises to the cytoplasm. It localises to the cytosol. It is found in the late endosome membrane. In terms of biological role, probable core component of the endosomal sorting required for transport complex III (ESCRT-III) which is involved in multivesicular bodies (MVBs) formation and sorting of endosomal cargo proteins into MVBs. MVBs contain intraluminal vesicles (ILVs) that are generated by invagination and scission from the limiting membrane of the endosome and mostly are delivered to lysosomes enabling degradation of membrane proteins, such as stimulated growth factor receptors, lysosomal enzymes and lipids. This chain is Charged multivesicular body protein 2b-B (chmp2b-b), found in Xenopus laevis (African clawed frog).